Reading from the N-terminus, the 303-residue chain is Ribosomal protein L11 methyltransferase (303 aa).

Thr144, Gly165, Asp187, and Asn235 together coordinate S-adenosyl-L-methionine.

It belongs to the methyltransferase superfamily. PrmA family.

Its subcellular location is the cytoplasm. The catalysed reaction is L-lysyl-[protein] + 3 S-adenosyl-L-methionine = N(6),N(6),N(6)-trimethyl-L-lysyl-[protein] + 3 S-adenosyl-L-homocysteine + 3 H(+). Methylates ribosomal protein L11. The sequence is that of Ribosomal protein L11 methyltransferase from Prochlorococcus marinus (strain MIT 9312).